The sequence spans 410 residues: Chaperone protein dnaJ 15 (410 aa).

One can recognise a J domain in the interval 17–82 (DPYEVLCVSK…EKRRHYDNAG (66 aa)). Residues 284 to 344 (AKTYEDTTEK…TVDELLKQRD (61 aa)) are a coiled coil. Residues 351–410 (SVVKTPSGNNLSNGSSSKAQGDESKGDGDSAGEEGGTENRDKSKRKWFNLNLKGSDKKLG) form a disordered region. Residues 357–367 (SGNNLSNGSSS) are compositionally biased toward low complexity.

This sequence belongs to the DnaJ family. B/II subfamily. Expressed at high levels in root cap, root tip meristematic region and elongation zones, and at lower levels in mature part of roots (at protein level). Constitutively expressed in seedlings, etiolated or not, roots, rosette leaves, cauline leaves, stems, flowers, siliques and pollen.

It localises to the cytoplasm. The protein localises to the cytoskeleton. Its subcellular location is the endoplasmic reticulum membrane. The protein resides in the golgi apparatus membrane. In terms of biological role, plays a continuous role in plant development probably in the structural organization of compartments. Seems to be involved in early gravitropic signal transduction within the gravity-perceiving cells (statocytes), where it influences pH changes and auxin distribution. Probably affects the localization and/or activity of auxin efflux carrier components (PIN proteins) or other proteins involved in lateral auxin transport. The chain is Chaperone protein dnaJ 15 (ATJ15) from Arabidopsis thaliana (Mouse-ear cress).